A 152-amino-acid polypeptide reads, in one-letter code: ESAT-6 secretion machinery protein EssA (152 aa).

Residues 1–114 (MLMNSVIALT…PYIQNKQEKK (114 aa)) lie on the Cytoplasmic side of the membrane. The helical transmembrane segment at 115-135 (IFPYILMSVGAFLTLGFVIFS) threads the bilayer. Over 136–152 (IHKGRRTKNESARKSNI) the chain is Extracellular.

The protein belongs to the EssA family.

The protein localises to the cell membrane. Functionally, component of the ESAT-6 secretion system (Ess). Required for the secretion of EsxA and EsxB. This is ESAT-6 secretion machinery protein EssA from Staphylococcus aureus (strain Mu50 / ATCC 700699).